The chain runs to 815 residues: Kinesin heavy chain (815 aa).

One can recognise a Kinesin motor domain in the interval 11–329 (GVQVFCRIRP…LLFGARAKTI (319 aa)). Residue 88–95 (GQTSSGKT) coordinates ATP. 3 coiled-coil regions span residues 335–374 (INEELTAEEWKRRYEKEKEKNTRLAALLQAAALELSRWRA), 422–554 (PITD…LDEC), and 695–785 (PAQK…RMNA). Residues 788–815 (IVKPIRPGQVYTSPSAGMSQGAPNGSNA) form a disordered region. The segment covering 797–815 (VYTSPSAGMSQGAPNGSNA) has biased composition (polar residues).

The protein belongs to the TRAFAC class myosin-kinesin ATPase superfamily. Kinesin family. Kinesin subfamily. As to quaternary structure, oligomer composed of two heavy chains and two light chains.

The protein resides in the cytoplasm. It is found in the cytoskeleton. Its function is as follows. Microtubule-dependent motor protein required for organelle transport. Plays a role in endosome transport. Required for the transport of mitochondria along the axon of motor neurons. Involved in the nuclear migration of hyp7 hypodermal precursor cells. Required for the formation of dendritic branches of PVD sensory neurons. In non-ciliated neurons such as the PVD and PHC neurons, required for the organization of minus-end out microtubules in dendrites. Also required for the minus-end out orientation of microtubules in dendrites of AQR gas-sensing neurons. Involved in the localization of unc-33 to neurites. Positively regulates cilium position and dendrite morphogenesis in the postembryonic AQR and PQR gas-sensing neurons. Plays a more prominent role in regulating dendrite morphogenesis in AQR than in PQR neurons. Plays a role in regulating the localization of grdn-1 to the distal dendrites of AQR sensory neurons. The polypeptide is Kinesin heavy chain (Caenorhabditis elegans).